Consider the following 875-residue polypeptide: GATOR2 complex protein MIOS (875 aa).

WD repeat units follow at residues 58 to 100 (SDTP…NSKF), 111 to 155 (KHAR…TPDI), 182 to 221 (GQND…QKMF), 223 to 261 (NTKA…KPVL), 265 to 306 (EQPK…TPIG), and 395 to 437 (RLRA…KQYT). The segment at 735–781 (VSCNFCGKSISYSCSAVPHQGRGFSQYGVSGSPTKSKVTSCPGCRKP) adopts a C4-type zinc-finger fold. Zn(2+) is bound by residues C737 and C740. A phosphoserine mark is found at S759 and S766. C775, C778, C788, C827, C830, H832, H835, H838, C849, C854, and C858 together coordinate Zn(2+). An RING-type; atypical zinc finger spans residues 782-863 (LPRCALCLIN…CTCKCMQLDT (82 aa)).

Belongs to the WD repeat mio family. As to quaternary structure, component of the GATOR2 subcomplex, composed of MIOS, SEC13, SEH1L, WDR24 and WDR59. The GATOR2 complex interacts with CASTOR1 and CASTOR2; the interaction is negatively regulated by arginine. CASTOR1 and CASTOR2 convey leucine availability via direct interaction with MIOS. The GATOR2 complex interacts with SESN1, SESN2 and SESN3; the interaction is negatively regulated by amino acids. Interacts with SAR1A and SAR1B; the interaction is direct, disrupted by leucine and mediates the interaction of SAR1A or SAR1B with the GATOR2 complex to negatively regulate the TORC1 signaling upon leucine deprivation.

The protein resides in the lysosome membrane. With respect to regulation, the GATOR2 complex is negatively regulated by the upstream amino acid sensors CASTOR1 and SESN2, which sequester the GATOR2 complex in absence of amino acids. In the presence of abundant amino acids, GATOR2 is released from CASTOR1 and SESN2 and activated. Its function is as follows. As a component of the GATOR2 complex, functions as an activator of the amino acid-sensing branch of the mTORC1 signaling pathway. The GATOR2 complex indirectly activates mTORC1 through the inhibition of the GATOR1 subcomplex. GATOR2 probably acts as an E3 ubiquitin-protein ligase toward GATOR1. In the presence of abundant amino acids, the GATOR2 complex mediates ubiquitination of the NPRL2 core component of the GATOR1 complex, leading to GATOR1 inactivation. In the absence of amino acids, GATOR2 is inhibited, activating the GATOR1 complex. Within the GATOR2 complex, MIOS is required to prevent autoubiquitination of WDR24, the catalytic subunit of the complex. The GATOR2 complex is required for brain myelination. This chain is GATOR2 complex protein MIOS, found in Homo sapiens (Human).